Consider the following 346-residue polypeptide: Cell shape-determining protein MreC (346 aa).

Residues 89-118 (NRRLKAELAEMRQWRDRALALQDQNDRFKS) are a coiled coil. The tract at residues 292–346 (SLPPVTTEDPQTSILSNPVSRPVAPTPSPATATPSAAPAARPATTATPPQTGAPR) is disordered. The span at 299–308 (EDPQTSILSN) shows a compositional bias: polar residues. Over residues 309–340 (PVSRPVAPTPSPATATPSAAPAARPATTATPP) the composition is skewed to low complexity.

The protein belongs to the MreC family. Interacts with penicillin-binding proteins (PBP2, PBP1a, PBP1b, PBP2a and PBP2b). Interacts with outer membrane proteins belonging to the TonB-dependent receptor family of transport proteins.

It localises to the periplasm. Its function is as follows. Involved in formation and maintenance of cell shape. Required for the spatial organization of components of the peptidoglycan-synthesizing holoenzyme in the periplasm and peptidoglycan synthetic activity. In Caulobacter vibrioides (strain NA1000 / CB15N) (Caulobacter crescentus), this protein is Cell shape-determining protein MreC.